Consider the following 402-residue polypeptide: Bisdemethoxycurcumin synthase (402 aa).

C174 functions as the Acyl-thioester intermediate in the catalytic mechanism.

The protein belongs to the thiolase-like superfamily. Chalcone/stilbene synthases family. In terms of assembly, homodimer.

The enzyme catalyses 2 4-coumaroyl-CoA + malonyl-CoA + H2O + H(+) = bisdemethoxycurcumin + 2 CO2 + 3 CoA. The protein operates within secondary metabolite biosynthesis; flavonoid biosynthesis. Functionally, plant-specific type III polyketide synthase (PKS) that catalyzes the one-pot formation of the C6-C7-C6 diarylheptanoid scaffold of bisdemethoxycurcumin by the condensation of two molecules of 4-coumaroyl-CoA and one molecule of malonyl-CoA. In Oryza sativa subsp. japonica (Rice), this protein is Bisdemethoxycurcumin synthase.